We begin with the raw amino-acid sequence, 331 residues long: Sucrose operon repressor (331 aa).

The HTH lacI-type domain maps to methionine 1–alanine 56. Positions leucine 4–histidine 23 form a DNA-binding region, H-T-H motif.

Its function is as follows. Repressor for the csc operon. Binds D-fructose as an inducer. The polypeptide is Sucrose operon repressor (cscR) (Escherichia coli).